The sequence spans 674 residues: Sodium/myo-inositol cotransporter 2 (674 aa).

Topologically, residues 1 to 27 are extracellular; that stretch reads MESSTSSPQPPLSDPLDPFPQRSLEPG. The helical transmembrane segment at 28–48 threads the bilayer; that stretch reads DIAVLVLYFLFVLAVGLWSTV. Over 49–56 the chain is Cytoplasmic; the sequence is KTKRDTVK. A helical membrane pass occupies residues 57-77; that stretch reads GYFLAGGDMVWWPVGASLFAS. Residues 78-102 lie on the Extracellular side of the membrane; sequence NVGSGHFVGLAGSGAATGISVAAYE. A helical transmembrane segment spans residues 103–123; the sequence is FNGMFSVLMLAWIFLPIYIAG. The Cytoplasmic portion of the chain corresponds to 124-140; that stretch reads QVTTMPEYLRRRFGGSR. The chain crosses the membrane as a helical span at residues 141 to 161; the sequence is IAITLAVLYLFIYIFTKISVD. Topologically, residues 162–180 are extracellular; the sequence is MYAGAIFIQQSLHLDLYLS. A helical membrane pass occupies residues 181 to 201; that stretch reads VVGLLAVTALYTVAGGLAAVI. Over 202 to 208 the chain is Cytoplasmic; sequence YTDALQT. The helical transmembrane segment at 209 to 229 threads the bilayer; the sequence is LIMLVGALTLMGYSFAAVGGM. Over 230 to 272 the chain is Extracellular; sequence EGLQEKYFLALPSNRSENSSCGLPREDAFHLFRDPLTSDLPWP. The chain crosses the membrane as a helical span at residues 273–293; that stretch reads GILFGMSIPSLWYWCTDQVIV. At 294 to 308 the chain is on the cytoplasmic side; that stretch reads QRSLAAKNLSHAKGG. Residues 309 to 329 traverse the membrane as a helical segment; it reads SLMAAYLKVLPLFIMVFPGMV. Residues 330-375 lie on the Extracellular side of the membrane; that stretch reads SRILFPDQVACADPETCQRVCNNPSGCSDIAYPKLVLELLPTGLRG. Residues 376–396 form a helical membrane-spanning segment; that stretch reads LMMAVMVAALMSSLTSIFNSA. Residues 397-418 lie on the Cytoplasmic side of the membrane; that stretch reads STIFTMDLWNHVRPRASEKELM. A helical transmembrane segment spans residues 419-439; it reads IVGRVFVLLLVLVSVLWIPVV. The Extracellular portion of the chain corresponds to 440-446; sequence QASQGGQ. Residues 447–467 form a helical membrane-spanning segment; it reads LFVYIQAISSYLQPPVAMVFV. At 468–479 the chain is on the cytoplasmic side; the sequence is LGCFWKRANEKG. A helical transmembrane segment spans residues 480 to 500; that stretch reads AFWGLVLGLLLGFIRLILDFI. Residues 501–521 lie on the Extracellular side of the membrane; it reads YVEPACHQPDERPSVVKNVHY. A helical membrane pass occupies residues 522–542; the sequence is LYFSMILSSVTVLTVTVMSLL. Residues 543 to 653 are Cytoplasmic-facing; that stretch reads TEPPSKEMIS…SIEENPVVKT (111 aa). Residues 654-674 traverse the membrane as a helical segment; the sequence is LLDVNCLLCICCAFFLWGYFA.

This sequence belongs to the sodium:solute symporter (SSF) (TC 2.A.21) family. Expressed in brain, lung and kidney. In the kidney, strongly expressed in the cortex, at the luminal side of proximal convoluted tubules and in BBMVs. Weaker expression observed in the medulla (at protein level).

The protein localises to the membrane. It localises to the apical cell membrane. The enzyme catalyses myo-inositol(out) + 2 Na(+)(out) = myo-inositol(in) + 2 Na(+)(in). It carries out the reaction 1D-chiro-inositol(out) + 2 Na(+)(out) = 1D-chiro-inositol(in) + 2 Na(+)(in). The catalysed reaction is D-glucose(out) + 2 Na(+)(out) = D-glucose(in) + 2 Na(+)(in). It catalyses the reaction D-xylose(out) + 2 Na(+)(out) = D-xylose(in) + 2 Na(+)(in). MI transport activity stimulated five-fold under 24 hour hypertonic shock conditions. MI inward currents were gradually inhibited as increasing amounts of phlorizin were added to the superfusion medium. When sodium is replaced by potassium, MI uptake is dramatically reduced and in the presence of L-fucose or D-chiro-inositol (DCI), the specific accumulation of tracer amounts of MI is also reduced. Involved in the sodium-dependent cotransport of myo-inositol (MI) with a Na(+):MI stoichiometry of 2:1. Exclusively responsible for apical MI transport and absorption in intestine. Can also transport D-chiro-inositol (DCI) but not L-fucose. Exhibits stereospecific cotransport of both D-glucose and D-xylose. May induce apoptosis through the TNF-alpha, PDCD1 pathway. May play a role in the regulation of MI concentration in serum, involving reabsorption in at least the proximal tubule of the kidney. The chain is Sodium/myo-inositol cotransporter 2 from Oryctolagus cuniculus (Rabbit).